The sequence spans 299 residues: Ribosomal protein uL3 glutamine methyltransferase (299 aa).

This sequence belongs to the protein N5-glutamine methyltransferase family. PrmB subfamily.

It carries out the reaction L-glutaminyl-[ribosomal protein uL3] + S-adenosyl-L-methionine = N(5)-methyl-L-glutaminyl-[ribosomal protein uL3] + S-adenosyl-L-homocysteine + H(+). In terms of biological role, methylates large ribosomal subunit protein uL3 on a specific glutamine residue. This Neisseria gonorrhoeae (strain ATCC 700825 / FA 1090) protein is Ribosomal protein uL3 glutamine methyltransferase.